Reading from the N-terminus, the 226-residue chain is Endonuclease NucS (226 aa).

Belongs to the NucS endonuclease family.

The protein resides in the cytoplasm. Functionally, cleaves both 3' and 5' ssDNA extremities of branched DNA structures. The protein is Endonuclease NucS of Mycobacterium tuberculosis (strain ATCC 25618 / H37Rv).